A 690-amino-acid chain; its full sequence is Highly divergent homeobox (690 aa).

Positions 3–63 form a DNA-binding region, homeobox 1; that stretch reads LRSVFTVEQQ…NKRRKMSSKN (61 aa). Disordered regions lie at residues 55–76 and 112–132; these read KRRK…TSLS and SPAS…QITE. Low complexity predominate over residues 64–76; the sequence is SESGTATTGTSLS. The segment covering 113 to 123 has biased composition (polar residues); the sequence is PASSSSRQGTN. Glycyl lysine isopeptide (Lys-Gly) (interchain with G-Cter in SUMO2) cross-links involve residues lysine 135, lysine 140, lysine 144, lysine 163, lysine 172, lysine 194, lysine 212, lysine 221, and lysine 232. The homeobox 2 DNA-binding region spans 435–498; sequence ALQDRTQFSD…NRRRKYRLMG (64 aa). Residues 501 to 539 are disordered; the sequence is VPPPRGGPADFSEQPESGSLSALTPGEEAGPEVGEDNDR. A Glycyl lysine isopeptide (Lys-Gly) (interchain with G-Cter in SUMO2) cross-link involves residue lysine 613. Positions 664 to 690 are disordered; it reads FNHASLEPDDTSFSVSSLSEKNVSESL. A compositionally biased stretch (polar residues) spans 674 to 690; it reads TSFSVSSLSEKNVSESL.

The protein localises to the nucleus. The polypeptide is Highly divergent homeobox (HDX) (Homo sapiens (Human)).